We begin with the raw amino-acid sequence, 130 residues long: Protein ApaG (130 aa).

In terms of domain architecture, ApaG spans 3–127; that stretch reads RALTKDIEVV…FSLDSPGLLR (125 aa).

In Rhizobium leguminosarum bv. trifolii (strain WSM2304), this protein is Protein ApaG.